The following is a 256-amino-acid chain: Imidazole glycerol phosphate synthase subunit HisF (256 aa).

Residues D12 and D131 contribute to the active site.

It belongs to the HisA/HisF family. Heterodimer of HisH and HisF.

The protein resides in the cytoplasm. The catalysed reaction is 5-[(5-phospho-1-deoxy-D-ribulos-1-ylimino)methylamino]-1-(5-phospho-beta-D-ribosyl)imidazole-4-carboxamide + L-glutamine = D-erythro-1-(imidazol-4-yl)glycerol 3-phosphate + 5-amino-1-(5-phospho-beta-D-ribosyl)imidazole-4-carboxamide + L-glutamate + H(+). It functions in the pathway amino-acid biosynthesis; L-histidine biosynthesis; L-histidine from 5-phospho-alpha-D-ribose 1-diphosphate: step 5/9. Functionally, IGPS catalyzes the conversion of PRFAR and glutamine to IGP, AICAR and glutamate. The HisF subunit catalyzes the cyclization activity that produces IGP and AICAR from PRFAR using the ammonia provided by the HisH subunit. This is Imidazole glycerol phosphate synthase subunit HisF from Azotobacter vinelandii (strain DJ / ATCC BAA-1303).